A 173-amino-acid chain; its full sequence is Crossover junction endodeoxyribonuclease RuvC (173 aa).

Catalysis depends on residues D8, E67, and D139. 3 residues coordinate Mg(2+): D8, E67, and D139.

It belongs to the RuvC family. In terms of assembly, homodimer which binds Holliday junction (HJ) DNA. The HJ becomes 2-fold symmetrical on binding to RuvC with unstacked arms; it has a different conformation from HJ DNA in complex with RuvA. In the full resolvosome a probable DNA-RuvA(4)-RuvB(12)-RuvC(2) complex forms which resolves the HJ. The cofactor is Mg(2+).

It is found in the cytoplasm. The enzyme catalyses Endonucleolytic cleavage at a junction such as a reciprocal single-stranded crossover between two homologous DNA duplexes (Holliday junction).. In terms of biological role, the RuvA-RuvB-RuvC complex processes Holliday junction (HJ) DNA during genetic recombination and DNA repair. Endonuclease that resolves HJ intermediates. Cleaves cruciform DNA by making single-stranded nicks across the HJ at symmetrical positions within the homologous arms, yielding a 5'-phosphate and a 3'-hydroxyl group; requires a central core of homology in the junction. The consensus cleavage sequence is 5'-(A/T)TT(C/G)-3'. Cleavage occurs on the 3'-side of the TT dinucleotide at the point of strand exchange. HJ branch migration catalyzed by RuvA-RuvB allows RuvC to scan DNA until it finds its consensus sequence, where it cleaves and resolves the cruciform DNA. The polypeptide is Crossover junction endodeoxyribonuclease RuvC (Shewanella sp. (strain MR-4)).